The chain runs to 490 residues: Ribosomal L1 domain-containing protein 1 (490 aa).

An N-acetylmethionine modification is found at Met1. A compositionally biased stretch (low complexity) spans 1–27 (MEDSASASLSSAAATGTSTSTPAAPTA). The tract at residues 1–33 (MEDSASASLSSAAATGTSTSTPAAPTARKQLDK) is disordered. Glycyl lysine isopeptide (Lys-Gly) (interchain with G-Cter in SUMO2) cross-links involve residues Lys120 and Lys254. The span at 280–293 (LNKKKKEARRKRRE) shows a compositional bias: basic residues. Positions 280 to 313 (LNKKKKEARRKRRERNFEKQKERKKKRQQARKTA) form a coiled coil. The disordered stretch occupies residues 280 to 490 (LNKKKKEARR…PKKPKVPQST (211 aa)). Residues 329–343 (TVKKPESKKEQTPEH) show a composition bias toward basic and acidic residues. The residue at position 340 (Thr340) is a Phosphothreonine. A compositionally biased stretch (basic residues) spans 344–353 (GKKKRGRGKA). Thr358 is modified (phosphothreonine). The residue at position 361 (Ser361) is a Phosphoserine. Thr375 bears the Phosphothreonine mark. Residues 376–385 (PANEKVEIQK) are compositionally biased toward basic and acidic residues. Residue Lys380 forms a Glycyl lysine isopeptide (Lys-Gly) (interchain with G-Cter in SUMO2) linkage. Phosphoserine is present on residues Ser392 and Ser396. Thr415 and Thr423 each carry phosphothreonine. Phosphoserine is present on Ser427. Basic and acidic residues predominate over residues 427–460 (SPEKKPKIKEEAVKEKSPSLGKKDARQTPKKPEA). Lys435 is covalently cross-linked (Glycyl lysine isopeptide (Lys-Gly) (interchain with G-Cter in SUMO2)). At Ser443 the chain carries Phosphoserine. Lys461 is covalently cross-linked (Glycyl lysine isopeptide (Lys-Gly) (interchain with G-Cter in SUMO2)). Thr465 carries the phosphothreonine modification. Lys468 is subject to N6-acetyllysine. At Ser469 the chain carries Phosphoserine. Basic residues predominate over residues 469–490 (SVRKASHTPKKWPKKPKVPQST).

Belongs to the universal ribosomal protein uL1 family. Highly divergent. In terms of assembly, interacts with ING1 (isoform 2). Interacts with KPNA7 and KPNA2. In terms of tissue distribution, expressed at high intensities in the heart, skeletal muscle, and placenta.

The protein resides in the nucleus. It is found in the nucleolus. In terms of biological role, regulates cellular senescence through inhibition of PTEN translation. Acts as a pro-apoptotic regulator in response to DNA damage. This Homo sapiens (Human) protein is Ribosomal L1 domain-containing protein 1 (RSL1D1).